A 266-amino-acid chain; its full sequence is MSANILVFDSGVGGLSILAAVREQLPSANYCYLFDNARLPYGELDEQELIQGCVTLISQAVIQCQADIVVVACNSASTLILPALRACLKVPVVGVVPAIKPAAALSQKKHLGLLATPGTVNRQYTQDLIDQFASDCRVDRFGSSELVYLAEDKMAQRPVDSEALHRILAPIKASGLDTLILGCTHFPILREELQSYLGEGVHLLDSSNAIAARVVSLLEPSMSGEIGKSQALYTTDSICEGLRKTLAAWGFRSATAFRDSLMPIGS.

Residues Asp9–Ser10 and Tyr41–Gly42 each bind substrate. Cys73 serves as the catalytic Proton donor/acceptor. Position 74-75 (Asn74–Ser75) interacts with substrate. Cys183 functions as the Proton donor/acceptor in the catalytic mechanism. Thr184–His185 is a substrate binding site.

The protein belongs to the aspartate/glutamate racemases family.

It catalyses the reaction L-glutamate = D-glutamate. Its pathway is cell wall biogenesis; peptidoglycan biosynthesis. Functionally, provides the (R)-glutamate required for cell wall biosynthesis. This chain is Glutamate racemase, found in Shewanella loihica (strain ATCC BAA-1088 / PV-4).